Reading from the N-terminus, the 289-residue chain is MKKLGFTRSSRRCSQPQEREQESERSRRRLRRRLSEGLLLLVALTVSGGLAAVLTPTPQVAVADEDSSALLRTGKQLFDTSCVSCHGANLQGVPDHGPSLIGVGEAAVYFQVSTGRMPAMRGEAQVARKDPIFNESQIDAIGAYIQANGGGPTVARNPDGSVAMQSLRGTDLGRGGDLFRLNCASCHNFTGKGGALSSGKYAPDLGPANEQQILTAMLTGPQNMPKFADRQLSFEAKKDIIGYVRTVIEERQPGGYSLGGFGPAPEGMAIWIIGMVTAIGLALWIGARA.

Positions 1 to 11 are enriched in basic residues; sequence MKKLGFTRSSR. The segment at 1–28 is disordered; the sequence is MKKLGFTRSSRRCSQPQEREQESERSRR. A helical membrane pass occupies residues 37–55; that stretch reads GLLLLVALTVSGGLAAVLT. 2 Cytochrome c domains span residues 69-149 and 170-248; these read ALLR…QANG and TDLG…RTVI. Heme c is bound by residues C82, C85, H86, C183, C186, and H187. The chain crosses the membrane as a helical span at residues 267–287; the sequence is GMAIWIIGMVTAIGLALWIGA.

The cytochrome bc1 complex is composed of a cytochrome b (QcrB), the Rieske iron-sulfur protein (QcrA) and a diheme cytochrome c (QcrC) subunit. Post-translationally, binds 2 heme c groups covalently per subunit.

It localises to the cell membrane. The enzyme catalyses a quinol + 2 Fe(III)-[cytochrome c](out) = a quinone + 2 Fe(II)-[cytochrome c](out) + 2 H(+)(out). Functionally, cytochrome b subunit of the cytochrome bc1 complex, an essential component of the respiratory electron transport chain required for ATP synthesis. The bc1 complex catalyzes the oxidation of ubiquinol and the reduction of cytochrome c in the respiratory chain. The bc1 complex operates through a Q-cycle mechanism that couples electron transfer to generation of the proton gradient that drives ATP synthesis. This is Cytochrome bc1 complex cytochrome c subunit (qcrC) from Mycobacterium leprae (strain TN).